A 103-amino-acid polypeptide reads, in one-letter code: Small ribosomal subunit protein uS10 (103 aa).

It belongs to the universal ribosomal protein uS10 family. As to quaternary structure, part of the 30S ribosomal subunit.

In terms of biological role, involved in the binding of tRNA to the ribosomes. The sequence is that of Small ribosomal subunit protein uS10 from Idiomarina loihiensis (strain ATCC BAA-735 / DSM 15497 / L2-TR).